A 532-amino-acid chain; its full sequence is Variant surface glycoprotein ILTAT 1.23 (532 aa).

An N-terminal signal peptide occupies residues 1-23 (MFKNINAAVLLLILSTRNDYANA). A glycan (N-linked (GlcNAc...) asparagine) is linked at N66. Disordered stretches follow at residues 79-107 (APKKGKQENSNNADGAPRSQEKTHARNHA) and 408-504 (MQAG…DQDK). Residue N419 is glycosylated (N-linked (GlcNAc...) asparagine). Over residues 427–445 (CKWEEKDGKDGKCVADDSK) the composition is skewed to basic and acidic residues. Over residues 450–470 (GNAPAGAGDGTAGTTTTPNCA) the composition is skewed to low complexity. Basic and acidic residues-rich tracts occupy residues 472–484 (HTDKTKCEEENKG) and 494–504 (KGKEGESDQDK). N-linked (GlcNAc...) asparagine glycosylation is present at N509. The GPI-anchor amidated asparagine moiety is linked to residue N509. The propeptide at 510 to 532 (GSFLAKKKFALSVVSAAFTALLF) is removed in mature form.

The protein localises to the cell membrane. Its function is as follows. VSG forms a coat on the surface of the parasite. The trypanosome evades the immune response of the host by expressing a series of antigenically distinct VSGs from an estimated 1000 VSG genes. The chain is Variant surface glycoprotein ILTAT 1.23 from Trypanosoma brucei brucei.